Consider the following 1342-residue polypeptide: DNA-directed RNA polymerase subunit beta (1342 aa).

This sequence belongs to the RNA polymerase beta chain family. As to quaternary structure, the RNAP catalytic core consists of 2 alpha, 1 beta, 1 beta' and 1 omega subunit. When a sigma factor is associated with the core the holoenzyme is formed, which can initiate transcription.

It carries out the reaction RNA(n) + a ribonucleoside 5'-triphosphate = RNA(n+1) + diphosphate. In terms of biological role, DNA-dependent RNA polymerase catalyzes the transcription of DNA into RNA using the four ribonucleoside triphosphates as substrates. This Actinobacillus pleuropneumoniae serotype 3 (strain JL03) protein is DNA-directed RNA polymerase subunit beta.